Consider the following 192-residue polypeptide: MQADTPKGCFVAVVGPSGAGKDTIMDAARVALSGDMRFHFVRRIITRTQMPGTEDHDSLDEADFARAAGEGRFALHWQAHGLRYGLPKTLDDEIAGGAVVIANVSRRVLSDIRRLYTSRSVVVISARTEVLAQRLASRGRESREEIAARLAREVGFDDGSGDVVTIDNSGEVGASTKAFLHHLHEIAVKTIA.

15–22 (GPSGAGKD) is a binding site for ATP.

This sequence belongs to the ribose 1,5-bisphosphokinase family.

The catalysed reaction is alpha-D-ribose 1,5-bisphosphate + ATP = 5-phospho-alpha-D-ribose 1-diphosphate + ADP. Its pathway is metabolic intermediate biosynthesis; 5-phospho-alpha-D-ribose 1-diphosphate biosynthesis; 5-phospho-alpha-D-ribose 1-diphosphate from D-ribose 5-phosphate (route II): step 3/3. Its function is as follows. Catalyzes the phosphorylation of ribose 1,5-bisphosphate to 5-phospho-D-ribosyl alpha-1-diphosphate (PRPP). This Brucella melitensis biotype 2 (strain ATCC 23457) protein is Ribose 1,5-bisphosphate phosphokinase PhnN.